Consider the following 124-residue polypeptide: Small ribosomal subunit protein uS12 (124 aa).

Aspartate 89 carries the post-translational modification 3-methylthioaspartic acid.

The protein belongs to the universal ribosomal protein uS12 family. As to quaternary structure, part of the 30S ribosomal subunit. Contacts proteins S8 and S17. May interact with IF1 in the 30S initiation complex.

With S4 and S5 plays an important role in translational accuracy. Its function is as follows. Interacts with and stabilizes bases of the 16S rRNA that are involved in tRNA selection in the A site and with the mRNA backbone. Located at the interface of the 30S and 50S subunits, it traverses the body of the 30S subunit contacting proteins on the other side and probably holding the rRNA structure together. The combined cluster of proteins S8, S12 and S17 appears to hold together the shoulder and platform of the 30S subunit. The protein is Small ribosomal subunit protein uS12 of Shewanella putrefaciens (strain CN-32 / ATCC BAA-453).